Reading from the N-terminus, the 124-residue chain is Large ribosomal subunit protein bL12 (124 aa).

It belongs to the bacterial ribosomal protein bL12 family. Homodimer. Part of the ribosomal stalk of the 50S ribosomal subunit. Forms a multimeric L10(L12)X complex, where L10 forms an elongated spine to which 2 to 4 L12 dimers bind in a sequential fashion. Binds GTP-bound translation factors.

Functionally, forms part of the ribosomal stalk which helps the ribosome interact with GTP-bound translation factors. Is thus essential for accurate translation. This chain is Large ribosomal subunit protein bL12, found in Azobacteroides pseudotrichonymphae genomovar. CFP2.